A 257-amino-acid chain; its full sequence is Hydroxyacylglutathione hydrolase (257 aa).

The Zn(2+) site is built by His55, His57, Asp59, His60, His112, Asp129, and His167.

Belongs to the metallo-beta-lactamase superfamily. Glyoxalase II family. In terms of assembly, monomer. Requires Zn(2+) as cofactor.

The enzyme catalyses an S-(2-hydroxyacyl)glutathione + H2O = a 2-hydroxy carboxylate + glutathione + H(+). Its pathway is secondary metabolite metabolism; methylglyoxal degradation; (R)-lactate from methylglyoxal: step 2/2. In terms of biological role, thiolesterase that catalyzes the hydrolysis of S-D-lactoyl-glutathione to form glutathione and D-lactic acid. The chain is Hydroxyacylglutathione hydrolase from Pseudoalteromonas translucida (strain TAC 125).